The sequence spans 617 residues: V-type proton ATPase catalytic subunit A (617 aa).

Thr136 is modified (phosphothreonine). 250–257 (GAFGCGKT) provides a ligand contact to ATP. The residue at position 384 (Ser384) is a Phosphoserine; by AMPK.

It belongs to the ATPase alpha/beta chains family. In terms of assembly, V-ATPase is a heteromultimeric enzyme made up of two complexes: the ATP-hydrolytic V1 complex and the proton translocation V0 complex. The V1 complex consists of three catalytic AB heterodimers that form a heterohexamer, three peripheral stalks each consisting of EG heterodimers, one central rotor including subunits D and F, and the regulatory subunits C and H. The proton translocation complex V0 consists of the proton transport subunit a, a ring of proteolipid subunits c9c'', rotary subunit d, subunits e and f, and the accessory subunits ATP6AP1/Ac45 and ATP6AP2/PRR. Interacts with the V0 complex V-ATPase subunit a4 ATP6V0A4. Interacts with WFS1. Interacts with alpha-crystallin B chain/CRYAB and with MTOR, forming a ternary complex. Post-translationally, phosphorylation at Ser-384 by AMPK down-regulates its enzyme activity.

The protein resides in the cytoplasm. It is found in the cytosol. Its subcellular location is the cytoplasmic vesicle. It localises to the secretory vesicle. The protein localises to the clathrin-coated vesicle membrane. The protein resides in the lysosome. It carries out the reaction ATP + H2O + 4 H(+)(in) = ADP + phosphate + 5 H(+)(out). ATP hydrolysis occurs at the interface between the nucleotide-binding domains of subunits A and B. ATP hydrolysis triggers a conformational change in the subunits D and F, which induces a shift of subunit d. The c-ring is subsequently rotated and results in a continuous proton translocation across the membrane. In terms of biological role, catalytic subunit of the V1 complex of vacuolar(H+)-ATPase (V-ATPase), a multisubunit enzyme composed of a peripheral complex (V1) that hydrolyzes ATP and a membrane integral complex (V0) that translocates protons. V-ATPase is responsible for acidifying and maintaining the pH of intracellular compartments and in some cell types, is targeted to the plasma membrane, where it is responsible for acidifying the extracellular environment. In aerobic conditions, involved in intracellular iron homeostasis, thus triggering the activity of Fe(2+) prolyl hydroxylase (PHD) enzymes, and leading to HIF1A hydroxylation and subsequent proteasomal degradation. May play a role in neurite development and synaptic connectivity. The sequence is that of V-type proton ATPase catalytic subunit A (ATP6V1A) from Pongo abelii (Sumatran orangutan).